The following is a 305-amino-acid chain: Porphobilinogen deaminase (305 aa).

An S-(dipyrrolylmethanemethyl)cysteine modification is found at Cys238.

The protein belongs to the HMBS family. In terms of assembly, monomer. Dipyrromethane serves as cofactor.

It catalyses the reaction 4 porphobilinogen + H2O = hydroxymethylbilane + 4 NH4(+). The protein operates within porphyrin-containing compound metabolism; protoporphyrin-IX biosynthesis; coproporphyrinogen-III from 5-aminolevulinate: step 2/4. Tetrapolymerization of the monopyrrole PBG into the hydroxymethylbilane pre-uroporphyrinogen in several discrete steps. The sequence is that of Porphobilinogen deaminase from Rubrobacter xylanophilus (strain DSM 9941 / JCM 11954 / NBRC 16129 / PRD-1).